We begin with the raw amino-acid sequence, 250 residues long: UDP-2,3-diacylglucosamine hydrolase (250 aa).

Residues D8, H10, D41, N79, and H115 each coordinate Mn(2+). 79–80 (NH) is a substrate binding site. Substrate-binding residues include D123, T165, K168, and H196. Residues H196 and H198 each contribute to the Mn(2+) site.

The protein belongs to the LpxH family. The cofactor is Mn(2+).

The protein localises to the cell inner membrane. The enzyme catalyses UDP-2-N,3-O-bis[(3R)-3-hydroxytetradecanoyl]-alpha-D-glucosamine + H2O = 2-N,3-O-bis[(3R)-3-hydroxytetradecanoyl]-alpha-D-glucosaminyl 1-phosphate + UMP + 2 H(+). Its pathway is glycolipid biosynthesis; lipid IV(A) biosynthesis; lipid IV(A) from (3R)-3-hydroxytetradecanoyl-[acyl-carrier-protein] and UDP-N-acetyl-alpha-D-glucosamine: step 4/6. Its function is as follows. Hydrolyzes the pyrophosphate bond of UDP-2,3-diacylglucosamine to yield 2,3-diacylglucosamine 1-phosphate (lipid X) and UMP by catalyzing the attack of water at the alpha-P atom. Involved in the biosynthesis of lipid A, a phosphorylated glycolipid that anchors the lipopolysaccharide to the outer membrane of the cell. The polypeptide is UDP-2,3-diacylglucosamine hydrolase (Blochmanniella pennsylvanica (strain BPEN)).